A 134-amino-acid chain; its full sequence is Acyl carrier protein, mitochondrial (134 aa).

A mitochondrion-targeting transit peptide spans 1–46; sequence MFRTAALTAARVARPAVASAVRAGVARPAFVQAVPKVAAFQAVRFY. The 77-residue stretch at 55 to 131 folds into the Carrier domain; that stretch reads DEVFSRIAQV…KAVEYILSQP (77 aa). Ser91 carries the post-translational modification O-(pantetheine 4'-phosphoryl)serine.

It belongs to the acyl carrier protein (ACP) family. In terms of assembly, complex I is composed of about 30 different subunits. 4'-phosphopantetheine is transferred from CoA to a specific serine of apo-ACP by acpS. This modification is essential for activity because fatty acids are bound in thioester linkage to the sulfhydryl of the prosthetic group.

The protein resides in the mitochondrion. It functions in the pathway lipid metabolism; fatty acid biosynthesis. In terms of biological role, carrier of the growing fatty acid chain in fatty acid biosynthesis. May be involved in the synthesis of very-long-chain fatty acids. Accessory and non-catalytic subunit of the mitochondrial membrane respiratory chain NADH dehydrogenase (Complex I), which functions in the transfer of electrons from NADH to the respiratory chain. The polypeptide is Acyl carrier protein, mitochondrial (nuo-12) (Neurospora crassa (strain ATCC 24698 / 74-OR23-1A / CBS 708.71 / DSM 1257 / FGSC 987)).